Consider the following 155-residue polypeptide: Peptide deformylase (155 aa).

Residues Cys-88 and His-130 each contribute to the Fe cation site. Glu-131 is a catalytic residue. His-134 is a binding site for Fe cation.

Belongs to the polypeptide deformylase family. Requires Fe(2+) as cofactor.

The catalysed reaction is N-terminal N-formyl-L-methionyl-[peptide] + H2O = N-terminal L-methionyl-[peptide] + formate. Removes the formyl group from the N-terminal Met of newly synthesized proteins. Requires at least a dipeptide for an efficient rate of reaction. N-terminal L-methionine is a prerequisite for activity but the enzyme has broad specificity at other positions. This Pelotomaculum thermopropionicum (strain DSM 13744 / JCM 10971 / SI) protein is Peptide deformylase.